The primary structure comprises 168 residues: Probable chorismate pyruvate-lyase (168 aa).

Substrate contacts are provided by R75, I114, and E155.

This sequence belongs to the UbiC family.

Its subcellular location is the cytoplasm. It catalyses the reaction chorismate = 4-hydroxybenzoate + pyruvate. It functions in the pathway cofactor biosynthesis; ubiquinone biosynthesis. Functionally, removes the pyruvyl group from chorismate, with concomitant aromatization of the ring, to provide 4-hydroxybenzoate (4HB) for the ubiquinone pathway. The sequence is that of Probable chorismate pyruvate-lyase from Psychrobacter arcticus (strain DSM 17307 / VKM B-2377 / 273-4).